The sequence spans 501 residues: Lysine--tRNA ligase (501 aa).

Mg(2+)-binding residues include Glu-411 and Glu-418.

The protein belongs to the class-II aminoacyl-tRNA synthetase family. In terms of assembly, homodimer. The cofactor is Mg(2+).

Its subcellular location is the cytoplasm. It catalyses the reaction tRNA(Lys) + L-lysine + ATP = L-lysyl-tRNA(Lys) + AMP + diphosphate. The chain is Lysine--tRNA ligase from Clostridium perfringens (strain SM101 / Type A).